Here is a 230-residue protein sequence, read N- to C-terminus: Ribosomal RNA large subunit methyltransferase E (230 aa).

S-adenosyl-L-methionine is bound by residues glycine 76, tryptophan 78, aspartate 99, aspartate 115, and aspartate 139. Lysine 179 serves as the catalytic Proton acceptor.

This sequence belongs to the class I-like SAM-binding methyltransferase superfamily. RNA methyltransferase RlmE family.

The protein localises to the cytoplasm. It carries out the reaction uridine(2552) in 23S rRNA + S-adenosyl-L-methionine = 2'-O-methyluridine(2552) in 23S rRNA + S-adenosyl-L-homocysteine + H(+). In terms of biological role, specifically methylates the uridine in position 2552 of 23S rRNA at the 2'-O position of the ribose in the fully assembled 50S ribosomal subunit. This chain is Ribosomal RNA large subunit methyltransferase E, found in Nitrobacter winogradskyi (strain ATCC 25391 / DSM 10237 / CIP 104748 / NCIMB 11846 / Nb-255).